The primary structure comprises 169 residues: Calfumirin-1 (169 aa).

4 EF-hand domains span residues 6–41 (NIVE…KKAF), 42–77 (NPER…DKAL), 93–128 (EVEE…TGAK), and 129–164 (DPEK…VQKL). Ca(2+) contacts are provided by Asp-19, Asn-21, Asp-23, Glu-25, Glu-30, Asp-55, Asp-57, Asp-59, Lys-61, Glu-66, Asp-108, Asn-110, Asp-112, Glu-117, Asp-142, Asn-144, Asp-146, Thr-148, and Glu-153.

May be involved in the phase-shift of cells from growth to differentiation. The chain is Calfumirin-1 (cafA) from Dictyostelium discoideum (Social amoeba).